The primary structure comprises 262 residues: Small ribosomal subunit protein uS2 (262 aa).

It belongs to the universal ribosomal protein uS2 family.

This chain is Small ribosomal subunit protein uS2, found in Roseiflexus sp. (strain RS-1).